Here is a 376-residue protein sequence, read N- to C-terminus: Lipid-A-disaccharide synthase (376 aa).

The protein belongs to the LpxB family.

It catalyses the reaction a lipid X + a UDP-2-N,3-O-bis[(3R)-3-hydroxyacyl]-alpha-D-glucosamine = a lipid A disaccharide + UDP + H(+). The protein operates within bacterial outer membrane biogenesis; LPS lipid A biosynthesis. Condensation of UDP-2,3-diacylglucosamine and 2,3-diacylglucosamine-1-phosphate to form lipid A disaccharide, a precursor of lipid A, a phosphorylated glycolipid that anchors the lipopolysaccharide to the outer membrane of the cell. This Hydrogenovibrio crunogenus (strain DSM 25203 / XCL-2) (Thiomicrospira crunogena) protein is Lipid-A-disaccharide synthase.